Reading from the N-terminus, the 276-residue chain is Large ribosomal subunit protein uL2 (276 aa).

The segment at 224 to 276 is disordered; that stretch reads VMNPVDHPHGGGEGKAPIGRKSPMTPWGKPTLGYKTRKKKNKSDKFIIRRRKK. Positions 258-276 are enriched in basic residues; that stretch reads KTRKKKNKSDKFIIRRRKK.

This sequence belongs to the universal ribosomal protein uL2 family. Part of the 50S ribosomal subunit. Forms a bridge to the 30S subunit in the 70S ribosome.

Functionally, one of the primary rRNA binding proteins. Required for association of the 30S and 50S subunits to form the 70S ribosome, for tRNA binding and peptide bond formation. It has been suggested to have peptidyltransferase activity; this is somewhat controversial. Makes several contacts with the 16S rRNA in the 70S ribosome. In Geobacillus kaustophilus (strain HTA426), this protein is Large ribosomal subunit protein uL2.